A 101-amino-acid polypeptide reads, in one-letter code: Small ribosomal subunit protein uS14 (101 aa).

It belongs to the universal ribosomal protein uS14 family. In terms of assembly, part of the 30S ribosomal subunit. Contacts proteins S3 and S10.

Binds 16S rRNA, required for the assembly of 30S particles and may also be responsible for determining the conformation of the 16S rRNA at the A site. The chain is Small ribosomal subunit protein uS14 from Aeromonas hydrophila subsp. hydrophila (strain ATCC 7966 / DSM 30187 / BCRC 13018 / CCUG 14551 / JCM 1027 / KCTC 2358 / NCIMB 9240 / NCTC 8049).